Here is a 503-residue protein sequence, read N- to C-terminus: Poxin-Schlafen (503 aa).

The poxin-like stretch occupies residues 1-236 (MFYAHAFGGY…SKEERVDYVL (236 aa)). His15 acts as the Proton donor in catalysis. The Shared with catalytic histidine of dimeric partner role is filled by Tyr136. The active-site Proton acceptor; shared with catalytic histidine of dimeric partner is Lys140. Residues 237-503 (MKRLESIHHL…PDEWVSHIKF (267 aa)) are schlafen-like.

In the N-terminal section; belongs to the poxin family. It in the C-terminal section; belongs to the Schlafen protein family. Subgroup poxviridae B3 subfamily. In terms of assembly, homodimer.

The enzyme catalyses 2',3'-cGAMP + H2O = Gp(2'-5')Ap(3') + H(+). Functionally, nuclease that is responsible for viral evasion of host cGAS-STING innate immunity. Cleaves 2',3'-cGAMP which is produced by host cGAS following recognition of intracellular foreign DNA and blocks the subsequent 2',3'-cGAMP-mediated activation of TMEM173/STING which normally spreads to adjacent cells and activates the interferon and NF-kappa-B immune responses. The sequence is that of Poxin-Schlafen (OPG188) from Cynomys gunnisoni (Gunnison's prairie dog).